Consider the following 1479-residue polypeptide: Type VII secretion system protein EssC (1479 aa).

The Cytoplasmic portion of the chain corresponds to 1–229 (MHKLIIKYNK…RPPQPIQKNN (229 aa)). The helical transmembrane segment at 230–252 (TVIWRSIIPPLVMIALTVVIFLV) threads the bilayer. Over 253 to 256 (RPIG) the chain is Extracellular. A helical transmembrane segment spans residues 257–279 (IYILMMIGMSSVTIVFGITTYFS). Over 280-1479 (EKKKYNKDVE…QAYQKIRWFK (1200 aa)) the chain is Cytoplasmic. FtsK domains lie at 652–846 (DDIL…QDSN) and 997–1183 (QGPM…SEVS). Residues 672–679 (GTTGSGKS) and 1014–1021 (GSPGYGRT) contribute to the ATP site.

Belongs to the EssC family. Homooligomer. Interacts with EsaE.

The protein resides in the cell membrane. Component of the type VII secretion system (Ess). Required for the secretion of substrates including EsxA and EsxB. However, unable to support secretion of the substrate protein EsxC. The sequence is that of Type VII secretion system protein EssC from Staphylococcus aureus (strain MSSA476).